A 337-amino-acid polypeptide reads, in one-letter code: Lipoyl synthase (337 aa).

[4Fe-4S] cluster is bound by residues Cys-81, Cys-86, Cys-92, Cys-107, Cys-111, Cys-114, and Ser-323. The region spanning 93-312 (FSHGTATFMI…EEYGNALGFS (220 aa)) is the Radical SAM core domain.

The protein belongs to the radical SAM superfamily. Lipoyl synthase family. The cofactor is [4Fe-4S] cluster.

It localises to the cytoplasm. The catalysed reaction is [[Fe-S] cluster scaffold protein carrying a second [4Fe-4S](2+) cluster] + N(6)-octanoyl-L-lysyl-[protein] + 2 oxidized [2Fe-2S]-[ferredoxin] + 2 S-adenosyl-L-methionine + 4 H(+) = [[Fe-S] cluster scaffold protein] + N(6)-[(R)-dihydrolipoyl]-L-lysyl-[protein] + 4 Fe(3+) + 2 hydrogen sulfide + 2 5'-deoxyadenosine + 2 L-methionine + 2 reduced [2Fe-2S]-[ferredoxin]. It participates in protein modification; protein lipoylation via endogenous pathway; protein N(6)-(lipoyl)lysine from octanoyl-[acyl-carrier-protein]: step 2/2. Catalyzes the radical-mediated insertion of two sulfur atoms into the C-6 and C-8 positions of the octanoyl moiety bound to the lipoyl domains of lipoate-dependent enzymes, thereby converting the octanoylated domains into lipoylated derivatives. The sequence is that of Lipoyl synthase from Xanthomonas oryzae pv. oryzae (strain MAFF 311018).